We begin with the raw amino-acid sequence, 318 residues long: Ribosomal RNA small subunit methyltransferase H (318 aa).

S-adenosyl-L-methionine is bound by residues 34 to 36 (GGH), aspartate 53, phenylalanine 82, aspartate 103, and glutamine 110.

The protein belongs to the methyltransferase superfamily. RsmH family.

The protein resides in the cytoplasm. It catalyses the reaction cytidine(1402) in 16S rRNA + S-adenosyl-L-methionine = N(4)-methylcytidine(1402) in 16S rRNA + S-adenosyl-L-homocysteine + H(+). Functionally, specifically methylates the N4 position of cytidine in position 1402 (C1402) of 16S rRNA. This Limosilactobacillus reuteri (strain DSM 20016) (Lactobacillus reuteri) protein is Ribosomal RNA small subunit methyltransferase H.